A 129-amino-acid polypeptide reads, in one-letter code: Glycine cleavage system H protein (129 aa).

The region spanning 24-106 (TYTVGITEHA…YAGGWIFKIK (83 aa)) is the Lipoyl-binding domain. Lysine 65 carries the post-translational modification N6-lipoyllysine.

The protein belongs to the GcvH family. The glycine cleavage system is composed of four proteins: P, T, L and H. The cofactor is (R)-lipoate.

Functionally, the glycine cleavage system catalyzes the degradation of glycine. The H protein shuttles the methylamine group of glycine from the P protein to the T protein. The sequence is that of Glycine cleavage system H protein from Escherichia coli O139:H28 (strain E24377A / ETEC).